We begin with the raw amino-acid sequence, 292 residues long: Putative pyruvate, phosphate dikinase regulatory protein (292 aa).

155-162 is a binding site for ADP; sequence GVSRSSKT.

The protein belongs to the pyruvate, phosphate/water dikinase regulatory protein family. PDRP subfamily.

It carries out the reaction N(tele)-phospho-L-histidyl/L-threonyl-[pyruvate, phosphate dikinase] + ADP = N(tele)-phospho-L-histidyl/O-phospho-L-threonyl-[pyruvate, phosphate dikinase] + AMP + H(+). It catalyses the reaction N(tele)-phospho-L-histidyl/O-phospho-L-threonyl-[pyruvate, phosphate dikinase] + phosphate + H(+) = N(tele)-phospho-L-histidyl/L-threonyl-[pyruvate, phosphate dikinase] + diphosphate. In terms of biological role, bifunctional serine/threonine kinase and phosphorylase involved in the regulation of the pyruvate, phosphate dikinase (PPDK) by catalyzing its phosphorylation/dephosphorylation. The polypeptide is Putative pyruvate, phosphate dikinase regulatory protein (Acidiphilium cryptum (strain JF-5)).